The following is a 537-amino-acid chain: Chaperonin GroEL 2 (537 aa).

Residues 29–32 (TLGP), 86–90 (DGTTT), G413, 477–479 (NAA), and D493 contribute to the ATP site.

This sequence belongs to the chaperonin (HSP60) family. In terms of assembly, forms a cylinder of 14 subunits composed of two heptameric rings stacked back-to-back. Interacts with the co-chaperonin GroES.

The protein localises to the cytoplasm. The enzyme catalyses ATP + H2O + a folded polypeptide = ADP + phosphate + an unfolded polypeptide.. Functionally, together with its co-chaperonin GroES, plays an essential role in assisting protein folding. The GroEL-GroES system forms a nano-cage that allows encapsulation of the non-native substrate proteins and provides a physical environment optimized to promote and accelerate protein folding. This chain is Chaperonin GroEL 2, found in Rhodococcus jostii (strain RHA1).